We begin with the raw amino-acid sequence, 215 residues long: MNIFRFAGDMSHLISVLILLLKIYATKSCAGISLKTQELYALVFLTRYLDLFTDYVSLYNSIMKIVFIASSLAIVWCMRRHPLVRRSYDKDLDTFRHQYVVLACFVLGLILNEKFTVQEVFWAFSIYLEAVAILPQLVLLQRSGNVDNLTGQYVVFLGAYRGLYIINWIYRYFTEDHFTRWIACVSGLVQTALYADFFYYYYISWKTNTKLKLPA.

Residues methionine 1–asparagine 2 are Lumenal-facing. A helical transmembrane segment spans residues isoleucine 3 to leucine 21. The Cytoplasmic segment spans residues lysine 22–lysine 35. Residues threonine 36–threonine 53 traverse the membrane as a helical segment. Residues aspartate 54 to serine 61 lie on the Lumenal side of the membrane. A helical membrane pass occupies residues isoleucine 62–proline 82. The Cytoplasmic portion of the chain corresponds to leucine 83–glutamine 98. A helical membrane pass occupies residues tyrosine 99 to asparagine 112. Residues glutamate 113 to glutamate 119 are Lumenal-facing. The helical transmembrane segment at valine 120–leucine 139 threads the bilayer. Residues leucine 140–glycine 151 are Cytoplasmic-facing. Residues glutamine 152–tyrosine 170 traverse the membrane as a helical segment. The Lumenal portion of the chain corresponds to arginine 171–tryptophan 181. A helical membrane pass occupies residues isoleucine 182–tyrosine 202. Topologically, residues isoleucine 203 to alanine 215 are cytoplasmic.

This sequence belongs to the ERD2 family.

The protein localises to the endoplasmic reticulum membrane. Required for the retention of luminal endoplasmic reticulum proteins. Determines the specificity of the luminal ER protein retention system. Also required for normal vesicular traffic through the Golgi. This receptor recognizes H-D-E-L. The protein is ER lumen protein-retaining receptor A (ERD2A) of Arabidopsis thaliana (Mouse-ear cress).